A 126-amino-acid chain; its full sequence is CD59 glycoprotein (126 aa).

The signal sequence occupies residues 1 to 25; it reads MGIQGGSVLFGLLLALAVFCHSGHS. The 81-residue stretch at 26 to 106 folds into the UPAR/Ly6 domain; that stretch reads LQCYNCPNPT…QLENGGTSLS (81 aa). 5 disulfides stabilise this stretch: Cys-28/Cys-51, Cys-31/Cys-38, Cys-44/Cys-64, Cys-70/Cys-88, and Cys-89/Cys-94. Residue Asn-43 is glycosylated (N-linked (GlcNAc...) asparagine). A lipid anchor (GPI-anchor amidated asparagine) is attached at Asn-100. Positions 101–126 are cleaved as a propeptide — removed in mature form; the sequence is GGTSLSEKTVLLLVTPLLAAAWCLHP.

As to quaternary structure, interacts with T-cell surface antigen CD2. Post-translationally, N- and O-glycosylated.

The protein localises to the cell membrane. Its subcellular location is the secreted. Functionally, potent inhibitor of the complement membrane attack complex (MAC) action, which protects self-cells from damage during complement activation. Acts by binding to the beta-haipins of C8 (C8A and C8B) components of the assembling MAC, forming an intermolecular beta-sheet that prevents incorporation of the multiple copies of C9 required for complete formation of the osmolytic pore. This is CD59 glycoprotein from Papio sp. (Baboon).